The sequence spans 443 residues: Cyclic GMP-AMP synthase (443 aa).

Position 61 (Ser61) interacts with ATP. Residues Asp78 and Asp80 contribute to the active site. Residue Asp80 participates in Mg(2+) binding. Asn124 contacts ATP. Asp138 is a catalytic residue. Residue Asp138 coordinates Mg(2+). Leu208 contributes to the ATP binding site.

Belongs to the CD-NTase family. B06 subfamily. The cofactor is Mg(2+).

It catalyses the reaction GTP + ATP = 3',3'-cGAMP + 2 diphosphate. The enzyme catalyses UTP + ATP = 3',3'-cUAMP + 2 diphosphate. The catalysed reaction is 2 ATP = 3',3'-c-di-AMP + 2 diphosphate. It carries out the reaction 2 GTP = 3',3'-c-di-GMP + 2 diphosphate. It catalyses the reaction UTP + GTP = 3',3'-cGMP-UMP + 2 diphosphate. In terms of biological role, cyclic nucleotide synthase (second messenger synthase) of a CBASS antivirus system. CBASS (cyclic oligonucleotide-based antiphage signaling system) provides immunity against bacteriophages. The CD-NTase protein (CdnB, this protein) synthesizes cyclic nucleotides in response to infection; these serve as specific second messenger signals. The signals activate a diverse range of effectors, leading to bacterial cell death and thus abortive phage infection. The effector protein for this system is membrane protein Cap15. Its function is as follows. Catalyzes the synthesis of 3',3'-cyclic GMP-AMP (3'3'-cGAMP) from GTP and ATP, a second messenger in cell signal transduction. Also makes cyclic UMP-AMP, cyclic UMP-GMP, cyclic di-AMP and cyclic-di-GMP. Protects E.coli against phage infection. When the CBASS operon (cdnB-cap15) is introduced in E.coli MG1655 there is about 100-fold protection against phage T2 and about 10-fold protection against phage T5 and T6. The polypeptide is Cyclic GMP-AMP synthase (Escherichia albertii).